The primary structure comprises 380 residues: Cytochrome b (380 aa).

Transmembrane regions (helical) follow at residues 34-54, 78-99, 114-134, and 179-199; these read FGSL…LLAM, WLIR…YLHI, WNTG…GYVL, and FFAL…IHLT. The heme b site is built by His-84 and His-98. His-183 and His-197 together coordinate heme b. His-202 contacts a ubiquinone. Transmembrane regions (helical) follow at residues 227 to 247, 289 to 309, 321 to 341, and 348 to 368; these read LKDI…ALFS, LGGV…PLLH, LSQL…WIGS, and FIII…VLFP.

This sequence belongs to the cytochrome b family. As to quaternary structure, the cytochrome bc1 complex contains 11 subunits: 3 respiratory subunits (MT-CYB, CYC1 and UQCRFS1), 2 core proteins (UQCRC1 and UQCRC2) and 6 low-molecular weight proteins (UQCRH/QCR6, UQCRB/QCR7, UQCRQ/QCR8, UQCR10/QCR9, UQCR11/QCR10 and a cleavage product of UQCRFS1). This cytochrome bc1 complex then forms a dimer. Heme b serves as cofactor.

The protein localises to the mitochondrion inner membrane. In terms of biological role, component of the ubiquinol-cytochrome c reductase complex (complex III or cytochrome b-c1 complex) that is part of the mitochondrial respiratory chain. The b-c1 complex mediates electron transfer from ubiquinol to cytochrome c. Contributes to the generation of a proton gradient across the mitochondrial membrane that is then used for ATP synthesis. This chain is Cytochrome b (MT-CYB), found in Thalassarche impavida (Albatross).